The following is a 633-amino-acid chain: UvrABC system protein C (633 aa).

The GIY-YIG domain occupies 21-100; sequence TDPGVYKFLD…IKELQPRYNV (80 aa). In terms of domain architecture, UVR spans 214-249; sequence QELMDLLKDEMQRQSDAHNFEEAARLRDQVKALKDY.

This sequence belongs to the UvrC family. As to quaternary structure, interacts with UvrB in an incision complex.

Its subcellular location is the cytoplasm. Functionally, the UvrABC repair system catalyzes the recognition and processing of DNA lesions. UvrC both incises the 5' and 3' sides of the lesion. The N-terminal half is responsible for the 3' incision and the C-terminal half is responsible for the 5' incision. In Salinibacter ruber (strain DSM 13855 / M31), this protein is UvrABC system protein C.